A 563-amino-acid polypeptide reads, in one-letter code: Quinidine resistance protein 1 (563 aa).

Positions Met1 to Arg10 are enriched in polar residues. Residues Met1–Asp50 form a disordered region. Residues Met1–Cys75 are Cytoplasmic-facing. A compositionally biased stretch (low complexity) spans Asp23 to Asp33. Positions Asp39–Ile49 are enriched in basic and acidic residues. A helical membrane pass occupies residues Ala76–Ile96. The Extracellular segment spans residues Glu97–Asn108. Residues Val109–Ala129 form a helical membrane-spanning segment. Topologically, residues Asp130 to Arg135 are cytoplasmic. Residues Pro136–His156 form a helical membrane-spanning segment. Residues Asn157–Arg165 are Extracellular-facing. A helical membrane pass occupies residues Cys166 to Val186. The Cytoplasmic segment spans residues Thr187 to Tyr195. A helical membrane pass occupies residues Val196–Gly216. The Extracellular portion of the chain corresponds to Leu217–Arg224. The chain crosses the membrane as a helical span at residues Ala225–Met245. Residues Pro246–Asp296 lie on the Cytoplasmic side of the membrane. Residues Phe297 to Gly317 traverse the membrane as a helical segment. Over Leu318–Ser341 the chain is Extracellular. A helical membrane pass occupies residues Val342–Ser362. At Ala363–Pro421 the chain is on the cytoplasmic side. The helical transmembrane segment at Ala422 to Val442 threads the bilayer. At Lys443–Pro445 the chain is on the extracellular side. The helical transmembrane segment at Leu446–Phe466 threads the bilayer. Topologically, residues Ser467–Thr481 are cytoplasmic. A helical membrane pass occupies residues Ala482–Thr502. At Lys503–Gly511 the chain is on the extracellular side. Residues Gly512–Leu532 traverse the membrane as a helical segment. Over Lys533 to Thr563 the chain is Cytoplasmic.

This sequence belongs to the major facilitator superfamily. CAR1 family.

The protein resides in the cell membrane. Functionally, multidrug resistance transporter involved in resistance and adaptation to quinidine and ketoconazole. In Saccharomyces cerevisiae (strain ATCC 204508 / S288c) (Baker's yeast), this protein is Quinidine resistance protein 1 (QDR1).